The sequence spans 241 residues: MTEGEGRIQLEPSWKARVGDWLLRPQMRELSAFLRQRKAAGARVFPPGPQIFAAFDATPFEQVKVVILGQDPYHGEGQAHGLCFSVLPGVPVPPSLLNIYKEIQDDLGIARPDHGYLMPWARQGVLLLNAVLTVEQGRAGAHQNKGWEGFTDHVVETLNREREGLVFLLWGSYAQSKGKVIDQTRHRVLKAPHPSPLSAHRGFLGCQHFSKTNDHLRRRGLSPIDWSLPPRSALDLTSAGA.

Catalysis depends on aspartate 71, which acts as the Proton acceptor.

This sequence belongs to the uracil-DNA glycosylase (UDG) superfamily. UNG family.

The protein localises to the cytoplasm. The catalysed reaction is Hydrolyzes single-stranded DNA or mismatched double-stranded DNA and polynucleotides, releasing free uracil.. Functionally, excises uracil residues from the DNA which can arise as a result of misincorporation of dUMP residues by DNA polymerase or due to deamination of cytosine. The sequence is that of Uracil-DNA glycosylase from Xanthomonas axonopodis pv. citri (strain 306).